A 413-amino-acid chain; its full sequence is Glutamate-1-semialdehyde 2,1-aminomutase (413 aa).

K260 is modified (N6-(pyridoxal phosphate)lysine).

Belongs to the class-III pyridoxal-phosphate-dependent aminotransferase family. HemL subfamily. Pyridoxal 5'-phosphate is required as a cofactor.

It is found in the cytoplasm. The catalysed reaction is (S)-4-amino-5-oxopentanoate = 5-aminolevulinate. It participates in porphyrin-containing compound metabolism; protoporphyrin-IX biosynthesis; 5-aminolevulinate from L-glutamyl-tRNA(Glu): step 2/2. In Methanoregula boonei (strain DSM 21154 / JCM 14090 / 6A8), this protein is Glutamate-1-semialdehyde 2,1-aminomutase.